Consider the following 413-residue polypeptide: uncharacterized protein (413 aa).

In terms of domain architecture, Response regulatory spans 2–129 (RILIVDDENT…KTTWKLRLME (128 aa)). The residue at position 54 (Asp-54) is a 4-aspartylphosphate.

This is an uncharacterized protein from Sinorhizobium fredii (strain NBRC 101917 / NGR234).